A 394-amino-acid chain; its full sequence is Phosphoglycerate kinase (394 aa).

Substrate contacts are provided by residues 21–23 (DFN), Arg36, 59–62 (HFGR), Arg118, and Arg151. ATP-binding positions include Lys201, Glu323, and 349–352 (GGDS).

It belongs to the phosphoglycerate kinase family. In terms of assembly, monomer.

The protein localises to the cytoplasm. The catalysed reaction is (2R)-3-phosphoglycerate + ATP = (2R)-3-phospho-glyceroyl phosphate + ADP. It participates in carbohydrate degradation; glycolysis; pyruvate from D-glyceraldehyde 3-phosphate: step 2/5. This is Phosphoglycerate kinase from Brevibacillus brevis (strain 47 / JCM 6285 / NBRC 100599).